The following is a 206-amino-acid chain: Ras-related protein Rab7 (206 aa).

GTP-binding positions include 15–22, 63–67, and 125–128; these read GDSGVGKT, DTAGQ, and NKVD. Residues Cys-205 and Cys-206 are each lipidated (S-geranylgeranyl cysteine).

This sequence belongs to the small GTPase superfamily. Rab family.

The protein resides in the cell membrane. Protein transport. Probably involved in vesicular traffic. The protein is Ras-related protein Rab7 of Cenchrus ciliaris (Buffelgrass).